A 192-amino-acid polypeptide reads, in one-letter code: Signal peptidase complex catalytic subunit SEC11C (192 aa).

Over valine 2 to arginine 28 the chain is Cytoplasmic. A helical; Signal-anchor for type II membrane protein transmembrane segment spans residues glutamine 29 to tryptophan 48. The Lumenal portion of the chain corresponds to lysine 49–serine 192. Residues serine 68, histidine 108, and aspartate 134 each act as charge relay system in the active site. Positions alanine 177–leucine 188 are C-terminal short (CTS) helix.

It belongs to the peptidase S26B family. As to quaternary structure, component of the signal peptidase complex paralog C (SPC-C) composed of a catalytic subunit SEC11C and three accessory subunits SPCS1, SPCS2 and SPCS3. Within the complex, interacts with SPCS2 and SPCS3. The complex induces a local thinning of the ER membrane which is used to measure the length of the signal peptide (SP) h-region of protein substrates. This ensures the selectivity of the complex towards h-regions shorter than 18-20 amino acids. In terms of processing, may undergo processing at the N-terminus.

It localises to the endoplasmic reticulum membrane. The catalysed reaction is Cleavage of hydrophobic, N-terminal signal or leader sequences from secreted and periplasmic proteins.. In terms of biological role, catalytic component of the signal peptidase complex (SPC) which catalyzes the cleavage of N-terminal signal sequences from nascent proteins as they are translocated into the lumen of the endoplasmic reticulum. Specifically cleaves N-terminal signal peptides that contain a hydrophobic alpha-helix (h-region) shorter than 18-20 amino acids. This is Signal peptidase complex catalytic subunit SEC11C (SEC11C) from Canis lupus familiaris (Dog).